Reading from the N-terminus, the 617-residue chain is ATP-dependent zinc metalloprotease FtsH (617 aa).

Over 1-7 the chain is Cytoplasmic; sequence MKIPFDR. The chain crosses the membrane as a helical span at residues 8-28; sequence WLGWPTLLLLLLGLWLLGSSL. At 29 to 102 the chain is on the periplasmic side; that stretch reads RDQRTVEAVP…VSYRRVRESN (74 aa). Residues 103-123 form a helical membrane-spanning segment; that stretch reads WLSQLLSWMAGPLLLLGFWYF. Topologically, residues 124–617 are cytoplasmic; that stretch reads MSRRIDGQQG…GRPAAIRQVA (494 aa). 198–205 contributes to the ATP binding site; it reads GPTGTGKT. His-421 contacts Zn(2+). Glu-422 is an active-site residue. Zn(2+) is bound by residues His-425 and Asp-498.

The protein in the central section; belongs to the AAA ATPase family. This sequence in the C-terminal section; belongs to the peptidase M41 family. As to quaternary structure, homohexamer. The cofactor is Zn(2+).

It localises to the cell inner membrane. Functionally, acts as a processive, ATP-dependent zinc metallopeptidase for both cytoplasmic and membrane proteins. Plays a role in the quality control of integral membrane proteins. This chain is ATP-dependent zinc metalloprotease FtsH, found in Methylibium petroleiphilum (strain ATCC BAA-1232 / LMG 22953 / PM1).